We begin with the raw amino-acid sequence, 375 residues long: Probable cytochrome c oxidase subunit 2 (375 aa).

Helical transmembrane passes span 36–56 (LAVSLGITAMLVSGCSIDNVW), 80–100 (IIAALAMGVLVWGLTFWTVVF), and 122–142 (LTYTAIPFVIIAVLFYFTVVV). Positions 264, 305, 309, and 313 each coordinate Cu cation. Polar residues predominate over residues 353 to 363 (VATSTRPFNTD). Positions 353-375 (VATSTRPFNTDRTVKSAAAPEAE) are disordered.

The protein belongs to the cytochrome c oxidase subunit 2 family. Cu cation is required as a cofactor. Heme serves as cofactor.

The protein resides in the cell membrane. It carries out the reaction 4 Fe(II)-[cytochrome c] + O2 + 8 H(+)(in) = 4 Fe(III)-[cytochrome c] + 2 H2O + 4 H(+)(out). Functionally, subunits I and II form the functional core of the enzyme complex. Electrons originating in cytochrome c are transferred via heme a and Cu(A) to the binuclear center formed by heme a3 and Cu(B). The chain is Probable cytochrome c oxidase subunit 2 (ctaC) from Nocardia farcinica (strain IFM 10152).